The primary structure comprises 425 residues: Serine--tRNA ligase (425 aa).

An L-serine-binding site is contributed by 231 to 233 (TAE). 262–264 (RSE) serves as a coordination point for ATP. Glu-285 contacts L-serine. An ATP-binding site is contributed by 349–352 (EISS). Ser-385 lines the L-serine pocket.

The protein belongs to the class-II aminoacyl-tRNA synthetase family. Type-1 seryl-tRNA synthetase subfamily. As to quaternary structure, homodimer. The tRNA molecule binds across the dimer.

The protein localises to the cytoplasm. It catalyses the reaction tRNA(Ser) + L-serine + ATP = L-seryl-tRNA(Ser) + AMP + diphosphate + H(+). The enzyme catalyses tRNA(Sec) + L-serine + ATP = L-seryl-tRNA(Sec) + AMP + diphosphate + H(+). Its pathway is aminoacyl-tRNA biosynthesis; selenocysteinyl-tRNA(Sec) biosynthesis; L-seryl-tRNA(Sec) from L-serine and tRNA(Sec): step 1/1. Its function is as follows. Catalyzes the attachment of serine to tRNA(Ser). Is also able to aminoacylate tRNA(Sec) with serine, to form the misacylated tRNA L-seryl-tRNA(Sec), which will be further converted into selenocysteinyl-tRNA(Sec). This is Serine--tRNA ligase from Desulfosudis oleivorans (strain DSM 6200 / JCM 39069 / Hxd3) (Desulfococcus oleovorans).